A 142-amino-acid polypeptide reads, in one-letter code: Large ribosomal subunit protein uL13 (142 aa).

The protein belongs to the universal ribosomal protein uL13 family. In terms of assembly, part of the 50S ribosomal subunit.

This protein is one of the early assembly proteins of the 50S ribosomal subunit, although it is not seen to bind rRNA by itself. It is important during the early stages of 50S assembly. This is Large ribosomal subunit protein uL13 from Chromobacterium violaceum (strain ATCC 12472 / DSM 30191 / JCM 1249 / CCUG 213 / NBRC 12614 / NCIMB 9131 / NCTC 9757 / MK).